A 314-amino-acid chain; its full sequence is Periplasmic [NiFe] hydrogenase small subunit (314 aa).

The tat-type signal signal peptide spans 1-49 (MNFSVGLGRDDAEKRLVQNGVSRRDFMKFCATVAAAMGMGPAFAPKVAE). Residues C67, C70, C164, C197, H234, C237, C262, and C268 each contribute to the [4Fe-4S] cluster site. Residues C277, C295, and C298 each coordinate [3Fe-4S] cluster.

The protein belongs to the [NiFe]/[NiFeSe] hydrogenase small subunit family. As to quaternary structure, heterodimer of a large and a small subunit. Requires [4Fe-4S] cluster as cofactor. The cofactor is [3Fe-4S] cluster. Predicted to be exported by the Tat system. The position of the signal peptide cleavage has been experimentally proven.

It localises to the periplasm. It carries out the reaction 2 Fe(III)-[cytochrome c3] + H2 = 2 Fe(II)-[cytochrome c3] + 2 H(+). Functionally, involved in hydrogen uptake for the anaerobic reduction of sulfate to hydrogen sulfide in an electron transport chain. Cytochrome c3 is the physiological electron acceptor. The sequence is that of Periplasmic [NiFe] hydrogenase small subunit (hydA) from Solidesulfovibrio fructosivorans (Desulfovibrio fructosivorans).